The following is a 304-amino-acid chain: Probable WRKY transcription factor 13 (304 aa).

The interval 141 to 190 (QKNNHGSEIDVDDNDDEVGDGGGINDDDNGRHHHHDTPSRHDKHNTASLG) is disordered. Over residues 149 to 159 (IDVDDNDDEVG) the composition is skewed to acidic residues. Positions 217–282 (SEVDVLDDGY…YEGRHLHSPS (66 aa)) form a DNA-binding region, WRKY.

Belongs to the WRKY group II-c family.

The protein localises to the nucleus. In terms of biological role, transcription factor. Interacts specifically with the W box (5'-(T)TGAC[CT]-3'), a frequently occurring elicitor-responsive cis-acting element. The chain is Probable WRKY transcription factor 13 (WRKY13) from Arabidopsis thaliana (Mouse-ear cress).